The chain runs to 37 residues: MKVRPSVKKMCDDCKVIKRKGIVRVICKNPKHKQRQG.

Belongs to the bacterial ribosomal protein bL36 family.

In Sulfurovum sp. (strain NBC37-1), this protein is Large ribosomal subunit protein bL36.